The following is a 298-amino-acid chain: MSEPVVDTAELSAEEKKRLLRERRQAKMSKGKATARLNDILSQGSSVKTSGVKSVLDQEKEATPSHDEDPEIQDITEITTPPPRTPPIGEDAPQDIDKIFQSMLQQQGQGADTAGDPFAQIMKMFNQVEGGDSPPSESATSTQDPAELKYRQELLEYNTYNQKLWKFRFLLVRVSVTLFNFFYHYINLSNFHASNYAYVRDLSSEKYPVRDFFTWFATTEVVLVAAYYSIFHSLGLFHAANQNSFVLKAMSMGSMVLPQLEHYKPLVARFLGYYELLGIVLGDLSLVIVLFGLLSFAN.

Residues 1–164 (MSEPVVDTAE…LEYNTYNQKL (164 aa)) lie on the Cytoplasmic side of the membrane. The tract at residues 40–92 (ILSQGSSVKTSGVKSVLDQEKEATPSHDEDPEIQDITEITTPPPRTPPIGEDA) is disordered. The segment covering 42 to 55 (SQGSSVKTSGVKSV) has biased composition (low complexity). Positions 56–67 (LDQEKEATPSHD) are enriched in basic and acidic residues. Residues 165 to 185 (WKFRFLLVRVSVTLFNFFYHY) traverse the membrane as a helical segment. At 186–211 (INLSNFHASNYAYVRDLSSEKYPVRD) the chain is on the lumenal side. The chain crosses the membrane as a helical span at residues 212-231 (FFTWFATTEVVLVAAYYSIF). Residues 232–275 (HSLGLFHAANQNSFVLKAMSMGSMVLPQLEHYKPLVARFLGYYE) lie on the Cytoplasmic side of the membrane. A helical membrane pass occupies residues 276-296 (LLGIVLGDLSLVIVLFGLLSF). Over 297 to 298 (AN) the chain is Lumenal.

It belongs to the GET2 family. As to quaternary structure, component of the Golgi to ER traffic (GET) complex, which is composed of GET1, GET2 and GET3. Within the complex, GET1 and GET2 form a heterotetramer which is stabilized by phosphatidylinositol binding and which binds to the GET3 homodimer.

It is found in the endoplasmic reticulum membrane. The protein localises to the golgi apparatus membrane. Its function is as follows. Required for the post-translational delivery of tail-anchored (TA) proteins to the endoplasmic reticulum. Together with GET1, acts as a membrane receptor for soluble GET3, which recognizes and selectively binds the transmembrane domain of TA proteins in the cytosol. The GET complex cooperates with the HDEL receptor ERD2 to mediate the ATP-dependent retrieval of resident ER proteins that contain a C-terminal H-D-E-L retention signal from the Golgi to the ER. This chain is Golgi to ER traffic protein 2, found in Candida albicans (strain SC5314 / ATCC MYA-2876) (Yeast).